The primary structure comprises 201 residues: Small ribosomal subunit protein uS4 (201 aa).

The segment at 26–45 (FEKRNYPPGQHGNNRRRGKK) is disordered. In terms of domain architecture, S4 RNA-binding spans 93–153 (SRLDNVVYRM…EKSKSLAVVQ (61 aa)).

This sequence belongs to the universal ribosomal protein uS4 family. Part of the 30S ribosomal subunit. Contacts protein S5. The interaction surface between S4 and S5 is involved in control of translational fidelity.

In terms of biological role, one of the primary rRNA binding proteins, it binds directly to 16S rRNA where it nucleates assembly of the body of the 30S subunit. Functionally, with S5 and S12 plays an important role in translational accuracy. The sequence is that of Small ribosomal subunit protein uS4 from Christiangramia forsetii (strain DSM 17595 / CGMCC 1.15422 / KT0803) (Gramella forsetii).